Here is an 835-residue protein sequence, read N- to C-terminus: Phosphatidylinositol 4-kinase beta (835 aa).

Disordered regions lie at residues 1 to 61 (MGDT…PLDV), 99 to 139 (SSAS…VRRR), and 267 to 341 (PSSQ…PVRL). The segment covering 19–59 (SPSTSTTSSLSLPSSPSSGPHPLTSSSPSTSEGLPTSSPPL) has biased composition (low complexity). Residues 59–262 (LDVISEGLGE…GTKLRKLILS (204 aa)) form the PIK helical domain. Basic and acidic residues-rich tracts occupy residues 125–134 (ISEEEVEPIK) and 267–276 (PSSQRIRREV). Residues 277–288 (PQPPPPYPPPLH) are compositionally biased toward pro residues. Residues 311-332 (DATVSISLSSNLKRTASNPKVE) show a composition bias toward polar residues. Residues 554-820 (EPWQEKVRRI…MVDGSMRSIT (267 aa)) form the PI3K/PI4K catalytic domain. The segment at 560-566 (VRRIREG) is G-loop. Residues 687–695 (QVKDRHNGN) form a catalytic loop region. An activation loop region spans residues 706–730 (HIDFGFILSSSPRNLGFETSAFKLT).

Belongs to the PI3/PI4-kinase family. Type III PI4K subfamily. Requires Mg(2+) as cofactor. Mn(2+) serves as cofactor. In terms of tissue distribution, expressed in the inner ear otic vesicles.

The protein resides in the endomembrane system. Its subcellular location is the mitochondrion outer membrane. The protein localises to the rough endoplasmic reticulum membrane. It catalyses the reaction a 1,2-diacyl-sn-glycero-3-phospho-(1D-myo-inositol) + ATP = a 1,2-diacyl-sn-glycero-3-phospho-(1D-myo-inositol 4-phosphate) + ADP + H(+). Phosphorylates phosphatidylinositol (PI) in the first committed step in the production of the second messenger inositol-1,4,5,-trisphosphate (PIP). May play an important role the in inner ear development. The sequence is that of Phosphatidylinositol 4-kinase beta (pi4kb) from Danio rerio (Zebrafish).